The chain runs to 286 residues: Shikimate dehydrogenase (NADP(+)) (286 aa).

Residues 20–22 (SLS) and serine 67 contribute to the shikimate site. Catalysis depends on lysine 71, which acts as the Proton acceptor. Positions 92 and 107 each coordinate shikimate. NADP(+) is bound by residues 131 to 135 (GGGGA) and alanine 230. Tyrosine 232 contributes to the shikimate binding site. Glycine 253 is a binding site for NADP(+).

Belongs to the shikimate dehydrogenase family. Homodimer.

The enzyme catalyses shikimate + NADP(+) = 3-dehydroshikimate + NADPH + H(+). It functions in the pathway metabolic intermediate biosynthesis; chorismate biosynthesis; chorismate from D-erythrose 4-phosphate and phosphoenolpyruvate: step 4/7. In terms of biological role, involved in the biosynthesis of the chorismate, which leads to the biosynthesis of aromatic amino acids. Catalyzes the reversible NADPH linked reduction of 3-dehydroshikimate (DHSA) to yield shikimate (SA). This chain is Shikimate dehydrogenase (NADP(+)), found in Lactococcus lactis subsp. cremoris (strain MG1363).